The sequence spans 339 residues: Phytoene synthase (339 aa).

It belongs to the phytoene/squalene synthase family. It depends on ATP as a cofactor. Requires Mn(2+) as cofactor. Mg(2+) serves as cofactor.

Its pathway is carotenoid biosynthesis; phytoene biosynthesis. Involved in the biosynthesis of carotenoids. Catalyzes the condensation of two molecules of geranylgeranyl diphosphate (GGPP) to give prephytoene diphosphate (PPPP) and the subsequent rearrangement of the cyclopropylcarbinyl intermediate to yield phytoene. In Rhodobacter capsulatus (strain ATCC BAA-309 / NBRC 16581 / SB1003), this protein is Phytoene synthase (crtB).